Here is a 627-residue protein sequence, read N- to C-terminus: Protein fem-1 homolog B (627 aa).

4 ANK repeats span residues 45–74 (QRST…VQTQ), 87–116 (DGAT…NVNH), 120–149 (TNST…NISI), and 153–182 (YDNT…DPNA). The Zn(2+) site is built by histidine 185, cysteine 186, and histidine 218. ANK repeat units lie at residues 186–215 (CGAT…AIVV) and 218–248 (HGMT…DRRS). The TPR repeat unit spans residues 344 to 377 (SHPIIYRGAVYADNMEFEQCIKLWLHALHLRQKG). ANK repeat units follow at residues 483–527 (EGFT…EVNA) and 531–568 (EGNS…HTDM).

The protein belongs to the fem-1 family. As to quaternary structure, component of a CRL2 E3 ubiquitin-protein ligase complex, also named ECS (Elongin BC-CUL2/5-SOCS-box protein) complex, composed of CUL2, Elongin BC (ELOB and ELOC), RBX1 and substrate-specific adapter FEM1B. Homooligomer. Interacts with PPM1F and PHTF1. Interacts with the death domain of FAS/TNFRSF6 and TNFRSF1A. Interacts with CHEK1. Interacts with NKX3-1. As to expression, present in adult testis (at protein level).

The protein resides in the cytoplasm. It localises to the nucleus. It participates in protein modification; protein ubiquitination. Activity of the CRL2(FEM1B) complex toward FNIP1 is inhibited by BEX family proteins (BEX1, BEX2, BEX3 and/or BEX4) in absence of reductive stress. Mechanistically, BEX proteins act as pseudosubstrate inhibitors that associate with FEM1B via zinc in absence of reductive stress, thereby preventing association between FEM1B and FNIP1. Functionally, substrate-recognition component of a Cul2-RING (CRL2) E3 ubiquitin-protein ligase complex of the DesCEND (destruction via C-end degrons) pathway, which recognizes a C-degron located at the extreme C terminus of target proteins, leading to their ubiquitination and degradation. The C-degron recognized by the DesCEND pathway is usually a motif of less than ten residues and can be present in full-length proteins, truncated proteins or proteolytically cleaved forms. The CRL2(FEM1B) complex specifically recognizes proteins ending with -Gly-Leu-Asp-Arg, such as CDK5R1, leading to their ubiquitination and degradation. Also acts as a regulator of the reductive stress response by mediating ubiquitination of reduced FNIP1: in response to reductive stress, the CRL2(FEM1B) complex specifically recognizes a conserved Cys degron in FNIP1 when this degron is reduced, leading to FNIP1 degradation and subsequent activation of mitochondria to recalibrate reactive oxygen species (ROS). Mechanistically, recognizes and binds reduced FNIP1 through two interface zinc ions, which act as a molecular glue that recruit reduced FNIP1 to FEM1B. Promotes ubiquitination of GLI1, suppressing GLI1 transcriptional activator activity. Promotes ubiquitination and degradation of ANKRD37. Promotes ubiquitination and degradation of SLBP. Involved in apoptosis by acting as a death receptor-associated protein that mediates apoptosis. Also involved in glucose homeostasis in pancreatic islet. May also act as an adapter/mediator in replication stress-induced signaling that leads to the activation of CHEK1. The sequence is that of Protein fem-1 homolog B from Rattus norvegicus (Rat).